Here is a 972-residue protein sequence, read N- to C-terminus: N-alpha-acetyltransferase 25, NatB auxiliary subunit (972 aa).

4 TPR repeats span residues 11 to 44, 45 to 78, 79 to 112, and 114 to 146; these read NDRRLRPIYDYLDNGNNKMAIQQADKLLKKHKDL, HCAKVLKAIGLQRTGKQEEAFTLAQEVAALEPTD, DNSLQALTILYREMHRPELVTKLYEAAVKKVPNS, and EYHSHLFMAYARVGEYKKMQQAGMALYKIVPKN.

Belongs to the MDM20/NAA25 family. In terms of assembly, component of the N-terminal acetyltransferase B (NatB) complex which is composed of NAA20 and NAA25.

It is found in the cytoplasm. Its function is as follows. Non-catalytic subunit of the NatB complex which catalyzes acetylation of the N-terminal methionine residues of peptides beginning with Met-Asp, Met-Glu, Met-Asn and Met-Gln. May play a role in normal cell-cycle progression. The sequence is that of N-alpha-acetyltransferase 25, NatB auxiliary subunit (NAA25) from Homo sapiens (Human).